The chain runs to 787 residues: Patatin-like phospholipase domain-containing protein OOU_Y34scaffold00095g16.3 (787 aa).

Disordered stretches follow at residues 47 to 69 (APDT…ARSF) and 137 to 164 (KVVG…PGRR). Low complexity predominate over residues 59 to 69 (ASPRSPSARSF). The segment covering 144-157 (HRQKKSSRRRKRSK) has biased composition (basic residues). A helical transmembrane segment spans residues 180–200 (WPFLLIVGAWIVGLAVTYLFT). The PNPLA domain occupies 375 to 566 (LCLSGGASFA…RTDIPIRALN (192 aa)). A GXSXG motif is present at residues 406–410 (GTSGG). Residue Ser-408 is the Nucleophile of the active site. Asp-553 (proton acceptor) is an active-site residue. Positions 745-787 (GTDEEITTNDEMEFASDEKAVLTEDEGQFDGVTDNTEGSPLLK) are disordered. The segment covering 746–759 (TDEEITTNDEMEFA) has biased composition (acidic residues). The span at 777-787 (TDNTEGSPLLK) shows a compositional bias: polar residues.

The protein belongs to the PLPL family.

The protein resides in the membrane. In terms of biological role, probable lipid hydrolase. The sequence is that of Patatin-like phospholipase domain-containing protein OOU_Y34scaffold00095g16.3 from Pyricularia oryzae (strain Y34) (Rice blast fungus).